The sequence spans 243 residues: MKHDLETLKHIIDSSNRITFFTGAGVSVASGVPDFRSMGGLFDEISKDGLSPEYLLSRDYLEDDPEGFINFCHKRLLFVDTMPNIVHDWIAKLERNQQSLGVITQNIDGLHSDAGSQHVDELHGTLNRFYCNACHKSYMKSDVIDRTLKHCDNCGGAIRPDIVLYGEMLDQPTIIRALNKIEDADTLVVLGSSLVVQPAAGLISNFKGDNLIIINKDRTPYDNDATLVIHDDMVSVVKSLMTE.

Residues 1–243 (MKHDLETLKH…VSVVKSLMTE (243 aa)) form the Deacetylase sirtuin-type domain. NAD(+)-binding residues include A24, F35, R36, Q105, I107, D108, and H123. Position 35 (F35) interacts with nicotinamide. The nicotinamide site is built by I107 and D108. H123 functions as the Proton acceptor in the catalytic mechanism. Residues C131, C134, C151, and C154 each contribute to the Zn(2+) site. Residues S192, S193, N215, and D232 each contribute to the NAD(+) site.

Belongs to the sirtuin family. Class U subfamily. The cofactor is Zn(2+).

The protein localises to the cytoplasm. The catalysed reaction is N(6)-acetyl-L-lysyl-[protein] + NAD(+) + H2O = 2''-O-acetyl-ADP-D-ribose + nicotinamide + L-lysyl-[protein]. NAD-dependent protein deacetylase which modulates the activities of several enzymes which are inactive in their acetylated form. This Staphylococcus aureus (strain MRSA252) protein is NAD-dependent protein deacetylase.